The sequence spans 158 residues: NADH-quinone oxidoreductase subunit B (158 aa).

Cys-37, Cys-38, Cys-102, and Cys-132 together coordinate [4Fe-4S] cluster.

The protein belongs to the complex I 20 kDa subunit family. As to quaternary structure, NDH-1 is composed of 14 different subunits. Subunits NuoB, C, D, E, F, and G constitute the peripheral sector of the complex. The cofactor is [4Fe-4S] cluster.

The protein resides in the cell inner membrane. It catalyses the reaction a quinone + NADH + 5 H(+)(in) = a quinol + NAD(+) + 4 H(+)(out). Its function is as follows. NDH-1 shuttles electrons from NADH, via FMN and iron-sulfur (Fe-S) centers, to quinones in the respiratory chain. The immediate electron acceptor for the enzyme in this species is believed to be ubiquinone. Couples the redox reaction to proton translocation (for every two electrons transferred, four hydrogen ions are translocated across the cytoplasmic membrane), and thus conserves the redox energy in a proton gradient. This Acidithiobacillus ferrooxidans (strain ATCC 23270 / DSM 14882 / CIP 104768 / NCIMB 8455) (Ferrobacillus ferrooxidans (strain ATCC 23270)) protein is NADH-quinone oxidoreductase subunit B.